Reading from the N-terminus, the 346-residue chain is MAMVSEFLKQAWFIENEEQEYVQTVKSSKGGPGSAVSPYPTFNPSSDVAALHKAIMVKGVDEATIIDILTRRNNAQRQQIKAAYLQETGKPLDETLKKALTGHLEEVVLALLKTPAQFDADELRAAMKGLGTDEDTLIEILASRTNKEIRDINRVYREELKRDLAKDITSDTSGDFRNALLSLAKGDRSEDFGVNEDLADSDARALYEAGERRKGTDVNVFNTILTTRSYPQLRRVFQKYTKYSKHDMNKVLDLELKGDIEKCLTAIVKCATSKPAFFAEKLHQAMKGVGTRHKALIRIMVSRSEIDMNDIKAFYQKMYGISLCQAILDETKGDYEKILVALCGGN.

The residue at position 2 (Ala-2) is an N-acetylalanine. Ser-5 carries the post-translational modification Phosphoserine; by TRPM7. Gln-19 participates in a covalent cross-link: Isoglutamyl lysine isopeptide (Gln-Lys) (interchain with K-?). Tyr-21 bears the Phosphotyrosine; by EGFR mark. A Phosphoserine; by PKC modification is found at Ser-27. 2 positions are modified to phosphoserine: Ser-34 and Ser-37. The residue at position 41 (Thr-41) is a Phosphothreonine. Annexin repeat units follow at residues 42 to 113 (FNPS…ALLK), 114 to 185 (TPAQ…SLAK), 197 to 269 (DLAD…AIVK), and 273 to 344 (SKPA…ALCG). Lys-58 carries the post-translational modification N6-acetyllysine. Residues Gly-59, Val-60, Glu-62, Lys-97, Leu-100, Glu-105, Met-127, Gly-129, Gly-131, Thr-132, and Glu-134 each contribute to the Ca(2+) site. Residue Thr-136 is modified to Phosphothreonine. 3 residues coordinate Ca(2+): Asp-171, Gly-210, and Arg-213. Lys-214 participates in a covalent cross-link: Glycyl lysine isopeptide (Lys-Gly) (interchain with G-Cter in SUMO1); alternate. Residue Lys-214 forms a Glycyl lysine isopeptide (Lys-Gly) (interchain with G-Cter in SUMO2); alternate linkage. Gly-215 is a binding site for Ca(2+). Residue Lys-239 is modified to N6-acetyllysine. Asp-253, Glu-255, and Leu-256 together coordinate Ca(2+). Residue Lys-257 forms a Glycyl lysine isopeptide (Lys-Gly) (interchain with G-Cter in SUMO1) linkage. 4 residues coordinate Ca(2+): Glu-261, Met-286, Gly-288, and Gly-290. Lys-312 carries the N6-acetyllysine modification. Cys-324 and Cys-343 are disulfide-bonded. The Ca(2+) site is built by Leu-328, Glu-330, and Thr-331. Residue Lys-332 forms a Glycyl lysine isopeptide (Lys-Gly) (interchain with G-Cter in SUMO1) linkage. Glu-336 contacts Ca(2+).

It belongs to the annexin family. Homodimer; non-covalently linked. Homodimer; linked by transglutamylation. Homodimers linked by transglutamylation are observed in placenta, but not in other tissues. Interacts with S100A11. Heterotetramer, formed by two molecules each of S100A11 and ANXA1. Interacts with DYSF. Interacts with EGFR. Phosphorylated by protein kinase C, EGFR and TRPM7. Phosphorylated in response to EGF treatment. In terms of processing, sumoylated. Post-translationally, proteolytically cleaved by cathepsin CTSG to release the active N-terminal peptide Ac2-26.

Its subcellular location is the nucleus. It localises to the cytoplasm. It is found in the cell projection. The protein localises to the cilium. The protein resides in the basolateral cell membrane. Its subcellular location is the lateral cell membrane. It localises to the cell membrane. It is found in the apical cell membrane. The protein localises to the membrane. The protein resides in the early endosome. Its subcellular location is the cytoplasmic vesicle membrane. It localises to the endosome membrane. It is found in the secreted. The protein localises to the extracellular space. The protein resides in the extracellular exosome. Its subcellular location is the cytoplasmic vesicle. It localises to the secretory vesicle lumen. It is found in the phagocytic cup. Functionally, plays important roles in the innate immune response as effector of glucocorticoid-mediated responses and regulator of the inflammatory process. Has anti-inflammatory activity. Plays a role in glucocorticoid-mediated down-regulation of the early phase of the inflammatory response. Contributes to the adaptive immune response by enhancing signaling cascades that are triggered by T-cell activation, regulates differentiation and proliferation of activated T-cells. Promotes the differentiation of T-cells into Th1 cells and negatively regulates differentiation into Th2 cells. Has no effect on unstimulated T-cells. Negatively regulates hormone exocytosis via activation of the formyl peptide receptors and reorganization of the actin cytoskeleton. Has high affinity for Ca(2+) and can bind up to eight Ca(2+) ions. Displays Ca(2+)-dependent binding to phospholipid membranes. Plays a role in the formation of phagocytic cups and phagosomes. Plays a role in phagocytosis by mediating the Ca(2+)-dependent interaction between phagosomes and the actin cytoskeleton. In terms of biological role, functions at least in part by activating the formyl peptide receptors and downstream signaling cascades. Promotes chemotaxis of granulocytes and monocytes via activation of the formyl peptide receptors. Promotes rearrangement of the actin cytoskeleton, cell polarization and cell migration. Promotes resolution of inflammation and wound healing. Acts via neutrophil N-formyl peptide receptors to enhance the release of CXCL2. This chain is Annexin A1 (ANXA1), found in Pan troglodytes (Chimpanzee).